The primary structure comprises 559 residues: Formate--tetrahydrofolate ligase (559 aa).

68 to 75 (TPAGEGKT) is a binding site for ATP.

This sequence belongs to the formate--tetrahydrofolate ligase family.

The enzyme catalyses (6S)-5,6,7,8-tetrahydrofolate + formate + ATP = (6R)-10-formyltetrahydrofolate + ADP + phosphate. The protein operates within one-carbon metabolism; tetrahydrofolate interconversion. This is Formate--tetrahydrofolate ligase from Rhizobium etli (strain ATCC 51251 / DSM 11541 / JCM 21823 / NBRC 15573 / CFN 42).